Reading from the N-terminus, the 117-residue chain is Protein RALF-like 27 (117 aa).

The first 27 residues, 1 to 27, serve as a signal peptide directing secretion; that stretch reads MTKTFFSFSFFFTSSLLLLLAATSATA. Residues 28–71 constitute a propeptide, removed in mature form; that stretch reads STGNVTSGLRYDGCAPGDTVGECITATVEEEDEEGVEAVVRRIL. Asn31 carries an N-linked (GlcNAc...) asparagine glycan. 2 disulfide bridges follow: Cys88-Cys96 and Cys107-Cys113.

Belongs to the plant rapid alkalinization factor (RALF) family.

The protein resides in the secreted. Its function is as follows. Cell signaling peptide that may regulate plant stress, growth, and development. Mediates a rapid alkalinization of extracellular space by mediating a transient increase in the cytoplasmic Ca(2+) concentration leading to a calcium-dependent signaling events through a cell surface receptor and a concomitant activation of some intracellular mitogen-activated protein kinases. The protein is Protein RALF-like 27 (RALFL27) of Arabidopsis thaliana (Mouse-ear cress).